Reading from the N-terminus, the 279-residue chain is Small ribosomal subunit protein uS2 (279 aa).

Residues 255 to 279 are disordered; it reads LLAGATTAAPEAAAGEAAAAPEQSS.

The protein belongs to the universal ribosomal protein uS2 family.

The polypeptide is Small ribosomal subunit protein uS2 (Mycolicibacterium gilvum (strain PYR-GCK) (Mycobacterium gilvum (strain PYR-GCK))).